The sequence spans 155 residues: Small ribosomal subunit protein uS7cz/uS7cy (155 aa).

The protein belongs to the universal ribosomal protein uS7 family. As to quaternary structure, part of the 30S ribosomal subunit.

It localises to the plastid. The protein localises to the chloroplast. In terms of biological role, one of the primary rRNA binding proteins, it binds directly to 16S rRNA where it nucleates assembly of the head domain of the 30S subunit. This Calycanthus floridus var. glaucus (Eastern sweetshrub) protein is Small ribosomal subunit protein uS7cz/uS7cy (rps7-A).